Reading from the N-terminus, the 290-residue chain is Multiple sugar-binding transport system permease protein MsmF (290 aa).

7 consecutive transmembrane segments (helical) span residues 12–32, 72–92, 104–124, 156–176, 201–221, 231–253, and 260–280; these read GWTF…FPMF, FTLV…IIIA, FFRA…SLIF, VIAS…ILFL, FWSV…IMAL, IFAL…VYNY, and YGYA…VSVL. The 212-residue stretch at 70–281 folds into the ABC transmembrane type-1 domain; the sequence is IGFTLVLTLA…IIIGIVSVLQ (212 aa).

It belongs to the binding-protein-dependent transport system permease family. MalFG subfamily.

The protein resides in the cell membrane. In terms of biological role, involved in a binding protein-dependent transport system responsible for the uptake of melibiose, raffinose and isomaltotriose. In Streptococcus mutans serotype c (strain ATCC 700610 / UA159), this protein is Multiple sugar-binding transport system permease protein MsmF (msmF).